Consider the following 603-residue polypeptide: Elongation factor 4 (603 aa).

The 185-residue stretch at 7 to 191 (SNIRNFSIVA…AIVTRLPPPK (185 aa)) folds into the tr-type G domain. GTP contacts are provided by residues 19-24 (DHGKST) and 138-141 (NKVD).

Belongs to the TRAFAC class translation factor GTPase superfamily. Classic translation factor GTPase family. LepA subfamily.

The protein localises to the cell inner membrane. The enzyme catalyses GTP + H2O = GDP + phosphate + H(+). Functionally, required for accurate and efficient protein synthesis under certain stress conditions. May act as a fidelity factor of the translation reaction, by catalyzing a one-codon backward translocation of tRNAs on improperly translocated ribosomes. Back-translocation proceeds from a post-translocation (POST) complex to a pre-translocation (PRE) complex, thus giving elongation factor G a second chance to translocate the tRNAs correctly. Binds to ribosomes in a GTP-dependent manner. The polypeptide is Elongation factor 4 (Bradyrhizobium diazoefficiens (strain JCM 10833 / BCRC 13528 / IAM 13628 / NBRC 14792 / USDA 110)).